We begin with the raw amino-acid sequence, 246 residues long: Major prion protein (246 aa).

The first 15 residues, 1–15, serve as a signal peptide directing secretion; the sequence is MLVLFVATWSDLGLC. The interval 16 to 223 is interaction with GRB2, ERI3 and SYN1; that stretch reads KKRPKPGGWN…ESQAYYQRGS (208 aa). The disordered stretch occupies residues 18 to 102; it reads RPKPGGWNTG…HKPSKPKTSM (85 aa). A run of 5 repeats spans residues 44–52, 53–60, 61–68, 69–76, and 77–84. The 5 X 8 AA tandem repeats of P-H-G-G-G-W-G-Q stretch occupies residues 44–84; the sequence is PQGGGGWGQPHGGGWGQPHGGGWGQPHGGGWGQPHGGGWGQ. Gly residues predominate over residues 45-88; sequence QGGGGWGQPHGGGWGQPHGGGWGQPHGGGWGQPHGGGWGQGGGT. His54, Gly55, Gly56, His62, Gly63, Gly64, His70, Gly71, Gly72, His78, Gly79, and Gly80 together coordinate Cu(2+). The segment covering 91-102 has biased composition (basic residues); sequence QWHKPSKPKTSM. A disulfide bridge links Cys172 with Cys207. Asn174 and Asn190 each carry an N-linked (GlcNAc...) asparagine glycan. A lipid anchor (GPI-anchor amidated serine) is attached at Ser223. Residues 224-246 constitute a propeptide, removed in mature form; that stretch reads SMVLFSSPPVILLISFLIFLIVG.

Belongs to the prion family. In terms of assembly, monomer and homodimer. Has a tendency to aggregate into amyloid fibrils containing a cross-beta spine, formed by a steric zipper of superposed beta-strands. Soluble oligomers may represent an intermediate stage on the path to fibril formation. Copper binding may promote oligomerization. Interacts with GRB2, APP, ERI3/PRNPIP and SYN1. Mislocalized cytosolically exposed PrP interacts with MGRN1; this interaction alters MGRN1 subcellular location and causes lysosomal enlargement. Interacts with KIAA1191.

The protein resides in the cell membrane. It is found in the golgi apparatus. Functionally, its primary physiological function is unclear. Has cytoprotective activity against internal or environmental stresses. May play a role in neuronal development and synaptic plasticity. May be required for neuronal myelin sheath maintenance. May play a role in iron uptake and iron homeostasis. Soluble oligomers are toxic to cultured neuroblastoma cells and induce apoptosis (in vitro). Association with GPC1 (via its heparan sulfate chains) targets PRNP to lipid rafts. Also provides Cu(2+) or Zn(2+) for the ascorbate-mediated GPC1 deaminase degradation of its heparan sulfate side chains. This chain is Major prion protein (PRNP), found in Cercocebus atys (Sooty mangabey).